Here is a 488-residue protein sequence, read N- to C-terminus: GTPase Der (488 aa).

The EngA-type G 1 domain maps to 3–166; sequence PVVALVGRPN…YALAPYAEAL (164 aa). GTP contacts are provided by residues 9–16, 56–60, and 118–121; these read GRPNVGKS, DTGGI, and NKVD. Positions 168 to 191 are disordered; it reads LNRDGDEDEDEEEREYSEEEAEAE. A compositionally biased stretch (acidic residues) spans 172–189; the sequence is GDEDEDEEEREYSEEEAE. In terms of domain architecture, EngA-type G 2 spans 200–373; that stretch reads IKMAIIGKPN…SVQEAYDSAT (174 aa). Residues 206-213, 253-257, and 318-321 contribute to the GTP site; these read GKPNVGKS, DTAGV, and NKWD. Positions 374–458 constitute a KH-like domain; it reads RRVSTSMLTR…PIQIRFQDSA (85 aa).

Belongs to the TRAFAC class TrmE-Era-EngA-EngB-Septin-like GTPase superfamily. EngA (Der) GTPase family. In terms of assembly, associates with the 50S ribosomal subunit.

Its function is as follows. GTPase that plays an essential role in the late steps of ribosome biogenesis. This is GTPase Der from Shewanella sediminis (strain HAW-EB3).